The chain runs to 200 residues: Shikimate kinase (200 aa).

41 to 46 (GVGKSS) lines the ATP pocket. Position 45 (serine 45) interacts with Mg(2+). Substrate contacts are provided by aspartate 63, arginine 87, and glycine 109. Residue arginine 147 coordinates ATP. Arginine 166 serves as a coordination point for substrate.

This sequence belongs to the shikimate kinase family. As to quaternary structure, monomer. Requires Mg(2+) as cofactor.

It localises to the cytoplasm. The enzyme catalyses shikimate + ATP = 3-phosphoshikimate + ADP + H(+). It functions in the pathway metabolic intermediate biosynthesis; chorismate biosynthesis; chorismate from D-erythrose 4-phosphate and phosphoenolpyruvate: step 5/7. In terms of biological role, catalyzes the specific phosphorylation of the 3-hydroxyl group of shikimic acid using ATP as a cosubstrate. This Caulobacter vibrioides (strain NA1000 / CB15N) (Caulobacter crescentus) protein is Shikimate kinase.